We begin with the raw amino-acid sequence, 1287 residues long: DNA-directed RNA polymerase subunit beta (1287 aa).

The protein belongs to the RNA polymerase beta chain family. As to quaternary structure, the RNAP catalytic core consists of 2 alpha, 1 beta, 1 beta' and 1 omega subunit. When a sigma factor is associated with the core the holoenzyme is formed, which can initiate transcription.

It carries out the reaction RNA(n) + a ribonucleoside 5'-triphosphate = RNA(n+1) + diphosphate. Its function is as follows. DNA-dependent RNA polymerase catalyzes the transcription of DNA into RNA using the four ribonucleoside triphosphates as substrates. This chain is DNA-directed RNA polymerase subunit beta, found in Salinibacter ruber (strain DSM 13855 / M31).